A 505-amino-acid polypeptide reads, in one-letter code: Protein disulfide-isomerase A3 (505 aa).

A signal peptide spans 1 to 24 (MSVPRPSRAALLLLVPLLALSAGA). Thioredoxin domains are found at residues 25–131 (SDVV…KQAG) and 341–483 (SRDG…REAT). Residues C55 and C58 each act as nucleophile in the active site. 3 disulfide bridges follow: C55–C58, C83–C90, and C404–C407. Catalysis depends on nucleophile residues C404 and C407. The segment at 486 to 505 (PVLQEEDKAKKSKKKAKEDL) is disordered. Basic residues predominate over residues 495–505 (KKSKKKAKEDL). The short motif at 502–505 (KEDL) is the Prevents secretion from ER element.

It belongs to the protein disulfide isomerase family.

Its subcellular location is the endoplasmic reticulum. The protein resides in the endoplasmic reticulum lumen. The protein localises to the melanosome. It catalyses the reaction Catalyzes the rearrangement of -S-S- bonds in proteins.. In terms of biological role, protein disulfide isomerase that catalyzes the formation, isomerization, and reduction or oxidation of disulfide bonds in client proteins and functions as a protein folding chaperone. The sequence is that of Protein disulfide-isomerase A3 (PDIA3) from Gallus gallus (Chicken).